The following is a 301-amino-acid chain: Oxaloacetate tautomerase YisK (301 aa).

Residue Lys99 coordinates oxalate. Mn(2+)-binding residues include Glu148, Glu150, and Asp179. 2 residues coordinate oxalate: Lys196 and Thr266.

This sequence belongs to the FAH family. Homodimer. Mg(2+) serves as cofactor. It depends on Mn(2+) as a cofactor.

The protein resides in the cytoplasm. The catalysed reaction is oxaloacetate = enol-oxaloacetate. The enzyme catalyses oxaloacetate + H(+) = pyruvate + CO2. Functionally, tautomerase that converts enol-oxaloacetate to the keto form of oxaloacetate. Also shows weak oxaloacetate decarboxylase (ODx), catalyzing the decarboxylation of oxaloacetate (OAA) to pyruvate and CO(2). The sequence is that of Oxaloacetate tautomerase YisK from Bacillus subtilis (strain 168).